The primary structure comprises 67 residues: Bombesin (67 aa).

Positions 1 to 30 (MLLLSAVKTLLLAWLGIVLVFMSIIKSAML) are cleaved as a signal peptide. The propeptide occupies 31–49 (DFLQEAGKLEGIETYKKEA). A Pyrrolidone carboxylic acid modification is found at glutamine 50. Methionine 64 bears the Methionine amide mark.

In terms of tissue distribution, expressed by the skin glands.

It is found in the secreted. Its function is as follows. Stimulates smooth muscle contraction in isolated rat stomach strip. This is Bombesin from Rana shuchinae (Sichuan frog).